Reading from the N-terminus, the 242-residue chain is tRNA (guanine-N(1)-)-methyltransferase (242 aa).

S-adenosyl-L-methionine contacts are provided by residues Gly-109 and 129 to 134; that span reads LGDFVL.

The protein belongs to the RNA methyltransferase TrmD family. In terms of assembly, homodimer.

Its subcellular location is the cytoplasm. The enzyme catalyses guanosine(37) in tRNA + S-adenosyl-L-methionine = N(1)-methylguanosine(37) in tRNA + S-adenosyl-L-homocysteine + H(+). Functionally, specifically methylates guanosine-37 in various tRNAs. This chain is tRNA (guanine-N(1)-)-methyltransferase, found in Exiguobacterium sibiricum (strain DSM 17290 / CCUG 55495 / CIP 109462 / JCM 13490 / 255-15).